The following is a 436-amino-acid chain: MSAEEDLIDYSDEELNTNETAAPAADSNGKKGELAAGGNVDKKGSYVGIHSTGFRDFLLKPELLRAIGDCGFEHPSEVQQTCIPQAMLGGDIICQAKSGLGKTAVFVLTTLQQVEPVAGECSVLVMCHTRELAFQIRNEYNRFSKYMPDIKTGVFFGGTPIQKDAELLKNKETHPHIIVGTPGRLNALVRDKFLRLSSVRIFVLDECDKMLDQIDMRRDVQEIFRATPQQKQVMMFSATLSDEIKPICKKFMQNPTEHYVDEDTKLTLHGLQQYFVALEEKEKNRKLNELLDDLQFNQVIIFVKSTLRATELDKLLRECNFPSIAVHSGVSQEERIRRYKEFKEFNKRICVATDVFGRGIDIERINLAINYDMPADADSYLHRVGRAGRFGTKGLAVSFVTNDQDKEVLTAIEKRFEVPIPEFPKDGIDASTYMAS.

The segment covering 1–16 (MSAEEDLIDYSDEELN) has biased composition (acidic residues). The interval 1 to 33 (MSAEEDLIDYSDEELNTNETAAPAADSNGKKGE) is disordered. The short motif at 52–80 (TGFRDFLLKPELLRAIGDCGFEHPSEVQQ) is the Q motif element. Positions 83 to 258 (IPQAMLGGDI…KKFMQNPTEH (176 aa)) constitute a Helicase ATP-binding domain. 96–103 (AKSGLGKT) serves as a coordination point for ATP. Positions 205–208 (DECD) match the DEAD box motif. Residues 270 to 431 (GLQQYFVALE…EFPKDGIDAS (162 aa)) form the Helicase C-terminal domain.

This sequence belongs to the DEAD box helicase family. DECD subfamily.

The protein localises to the nucleus. It catalyses the reaction ATP + H2O = ADP + phosphate + H(+). Its function is as follows. ATP-binding RNA helicase involved in transcription elongation and required for the export of mRNA out of the nucleus. SUB2 also plays a role in pre-mRNA splicing and spliceosome assembly. May be involved in rDNA and telomeric silencing, and maintenance of genome integrity. The protein is ATP-dependent RNA helicase SUB2 (SUB2) of Pyricularia oryzae (strain 70-15 / ATCC MYA-4617 / FGSC 8958) (Rice blast fungus).